Consider the following 454-residue polypeptide: Bifunctional protein GlmU (454 aa).

A pyrophosphorylase region spans residues 1–227 (MSKLSVVILA…MMEVEGANNR (227 aa)). UDP-N-acetyl-alpha-D-glucosamine is bound by residues 9 to 12 (LAAG), Lys-23, Gln-74, 79 to 80 (GT), 101 to 103 (YGD), Gly-138, Glu-152, Asn-167, and Asn-225. Asp-103 is a Mg(2+) binding site. Asn-225 lines the Mg(2+) pocket. The linker stretch occupies residues 228–248 (LQLAALERYFQRKQATALLLA). The segment at 249 to 454 (GVSLADPERF…ADWERPSKKK (206 aa)) is N-acetyltransferase. Positions 331 and 349 each coordinate UDP-N-acetyl-alpha-D-glucosamine. The active-site Proton acceptor is His-361. 2 residues coordinate UDP-N-acetyl-alpha-D-glucosamine: Tyr-364 and Asn-375. Acetyl-CoA is bound by residues Ala-378, 384–385 (NY), Ser-403, Ala-421, and Arg-438.

The protein in the N-terminal section; belongs to the N-acetylglucosamine-1-phosphate uridyltransferase family. It in the C-terminal section; belongs to the transferase hexapeptide repeat family. Homotrimer. Mg(2+) serves as cofactor.

It is found in the cytoplasm. It catalyses the reaction alpha-D-glucosamine 1-phosphate + acetyl-CoA = N-acetyl-alpha-D-glucosamine 1-phosphate + CoA + H(+). The enzyme catalyses N-acetyl-alpha-D-glucosamine 1-phosphate + UTP + H(+) = UDP-N-acetyl-alpha-D-glucosamine + diphosphate. The protein operates within nucleotide-sugar biosynthesis; UDP-N-acetyl-alpha-D-glucosamine biosynthesis; N-acetyl-alpha-D-glucosamine 1-phosphate from alpha-D-glucosamine 6-phosphate (route II): step 2/2. It functions in the pathway nucleotide-sugar biosynthesis; UDP-N-acetyl-alpha-D-glucosamine biosynthesis; UDP-N-acetyl-alpha-D-glucosamine from N-acetyl-alpha-D-glucosamine 1-phosphate: step 1/1. It participates in bacterial outer membrane biogenesis; LPS lipid A biosynthesis. In terms of biological role, catalyzes the last two sequential reactions in the de novo biosynthetic pathway for UDP-N-acetylglucosamine (UDP-GlcNAc). The C-terminal domain catalyzes the transfer of acetyl group from acetyl coenzyme A to glucosamine-1-phosphate (GlcN-1-P) to produce N-acetylglucosamine-1-phosphate (GlcNAc-1-P), which is converted into UDP-GlcNAc by the transfer of uridine 5-monophosphate (from uridine 5-triphosphate), a reaction catalyzed by the N-terminal domain. The chain is Bifunctional protein GlmU from Actinobacillus succinogenes (strain ATCC 55618 / DSM 22257 / CCUG 43843 / 130Z).